The chain runs to 259 residues: UPF0246 protein RD1_0358 (259 aa).

The protein belongs to the UPF0246 family.

The sequence is that of UPF0246 protein RD1_0358 from Roseobacter denitrificans (strain ATCC 33942 / OCh 114) (Erythrobacter sp. (strain OCh 114)).